The primary structure comprises 665 residues: MSQTSLHHARLDWNEAGTPVSSEFGDVYFSNDNGLSETRYVFLQQNRLPARFSHHDSDIFVIGETGFGTGLNFLATMAAFLEQAPQSGNGARLHFISFEKYPLTREDLRKALAAWPELATFSQPLIEQWPLPVAGCHRLLFAGGRIRLDLWFGDIKEMLPQVPHPADGLVDAWYLDGFSPAKNPEMWTQALFDGLARLARPHATIATFTCAGFVRRGLIAAGFAMQKVKGHGSKREMLAGERAEKQPQQTIAPWYARPAGRAGEVLIIGGGIASAMTALSLVERGRRVTLLCQDGEPATGASGNRQGALYPLLNGEHDVLSRFYSLAFGFARSRLLALAKRHPVAFSLCGVTQLGYDDKSAAKLAKMAQGPFPPELMQVLSEPEAEQVVGLPCGHGGVSYPQGGWLCPADLTRAAIKEAQASGLLEVVFNTEVVAMAEQADGWQVESRDGRRWQAPNLVVAAGHQLPALIPFAELPLYPVRGQVSHVPTSVSLSKLNTVLCYDGYLTPAHHDHHCIGASYGRNQTDLEFRADEQAQNQARLQACLPQQAWPAEVDVSGNQARVGVRSASRDHLPVVGPVASLAKLADHYAGLQGDQQNAAPLPLHPGLYVLGALGSRGLCSAPLCGELLASEICGDPLPLAADLLEALHPARYWVRKLLKGKPLQ.

The segment at 1–243 (MSQTSLHHAR…KREMLAGERA (243 aa)) is tRNA (mnm(5)s(2)U34)-methyltransferase. An FAD-dependent cmnm(5)s(2)U34 oxidoreductase region spans residues 268–665 (IGGGIASAMT…RKLLKGKPLQ (398 aa)).

The protein in the N-terminal section; belongs to the methyltransferase superfamily. tRNA (mnm(5)s(2)U34)-methyltransferase family. This sequence in the C-terminal section; belongs to the DAO family. Requires FAD as cofactor.

The protein localises to the cytoplasm. The catalysed reaction is 5-aminomethyl-2-thiouridine(34) in tRNA + S-adenosyl-L-methionine = 5-methylaminomethyl-2-thiouridine(34) in tRNA + S-adenosyl-L-homocysteine + H(+). In terms of biological role, catalyzes the last two steps in the biosynthesis of 5-methylaminomethyl-2-thiouridine (mnm(5)s(2)U) at the wobble position (U34) in tRNA. Catalyzes the FAD-dependent demodification of cmnm(5)s(2)U34 to nm(5)s(2)U34, followed by the transfer of a methyl group from S-adenosyl-L-methionine to nm(5)s(2)U34, to form mnm(5)s(2)U34. This Aeromonas hydrophila subsp. hydrophila (strain ATCC 7966 / DSM 30187 / BCRC 13018 / CCUG 14551 / JCM 1027 / KCTC 2358 / NCIMB 9240 / NCTC 8049) protein is tRNA 5-methylaminomethyl-2-thiouridine biosynthesis bifunctional protein MnmC.